The primary structure comprises 169 residues: Cell division inhibitor SulA (169 aa).

A compositionally biased stretch (polar residues) spans 1–15 (MFTSAHANRSAQASA). The disordered stretch occupies residues 1-22 (MFTSAHANRSAQASASAGHYAH). The interval 106–112 (ALRTGNY) is ftsZ binding. The segment at 162-169 (KIHSNLYH) is lon protease binding.

Belongs to the SulA family. Interacts with FtsZ. Is rapidly cleaved and degraded by the Lon protease once DNA damage is repaired.

In terms of biological role, component of the SOS system and an inhibitor of cell division. Accumulation of SulA causes rapid cessation of cell division and the appearance of long, non-septate filaments. In the presence of GTP, binds a polymerization-competent form of FtsZ in a 1:1 ratio, thus inhibiting FtsZ polymerization and therefore preventing it from participating in the assembly of the Z ring. This mechanism prevents the premature segregation of damaged DNA to daughter cells during cell division. This chain is Cell division inhibitor SulA, found in Klebsiella pneumoniae (strain 342).